Consider the following 326-residue polypeptide: Beta-ketoacyl-[acyl-carrier-protein] synthase III (326 aa).

Residues C120 and H253 contribute to the active site. The segment at 254–258 is ACP-binding; the sequence is QANIR. The active site involves N283.

Belongs to the thiolase-like superfamily. FabH family. Homodimer.

Its subcellular location is the cytoplasm. It catalyses the reaction malonyl-[ACP] + acetyl-CoA + H(+) = 3-oxobutanoyl-[ACP] + CO2 + CoA. Its pathway is lipid metabolism; fatty acid biosynthesis. In terms of biological role, catalyzes the condensation reaction of fatty acid synthesis by the addition to an acyl acceptor of two carbons from malonyl-ACP. Catalyzes the first condensation reaction which initiates fatty acid synthesis and may therefore play a role in governing the total rate of fatty acid production. Possesses both acetoacetyl-ACP synthase and acetyl transacylase activities. Its substrate specificity determines the biosynthesis of branched-chain and/or straight-chain of fatty acids. The protein is Beta-ketoacyl-[acyl-carrier-protein] synthase III of Cupriavidus necator (strain ATCC 17699 / DSM 428 / KCTC 22496 / NCIMB 10442 / H16 / Stanier 337) (Ralstonia eutropha).